Here is a 93-residue protein sequence, read N- to C-terminus: MRKDIHPNYQEVLFHDTNADVFFLTRSTVKTKTTREYEGSEYPYYPLDISSASHPFYTGEQRKTSTEGRVASFNKRFGAFGGRKKAADADAAE.

This sequence belongs to the bacterial ribosomal protein bL31 family. Type B subfamily. Part of the 50S ribosomal subunit.

The polypeptide is Large ribosomal subunit protein bL31B (Psychrobacter cryohalolentis (strain ATCC BAA-1226 / DSM 17306 / VKM B-2378 / K5)).